Reading from the N-terminus, the 335-residue chain is Beta-hexosaminidase (335 aa).

Residues Asp60, Arg68, Arg133, and 163 to 164 each bind substrate; that span reads KH. His176 acts as the Proton donor/acceptor in catalysis. The Nucleophile role is filled by Asp247.

It belongs to the glycosyl hydrolase 3 family. NagZ subfamily. As to quaternary structure, monomer.

It is found in the cytoplasm. The catalysed reaction is Hydrolysis of terminal non-reducing N-acetyl-D-hexosamine residues in N-acetyl-beta-D-hexosaminides.. Its pathway is cell wall biogenesis; peptidoglycan recycling. Functionally, plays a role in peptidoglycan recycling by cleaving the terminal beta-1,4-linked N-acetylglucosamine (GlcNAc) from peptide-linked peptidoglycan fragments, giving rise to free GlcNAc, anhydro-N-acetylmuramic acid and anhydro-N-acetylmuramic acid-linked peptides. The chain is Beta-hexosaminidase from Xylella fastidiosa (strain 9a5c).